A 280-amino-acid chain; its full sequence is tRNA(Ile)-lysidine synthase, plastid (280 aa).

28-33 (SAGQDS) is a binding site for ATP.

It belongs to the tRNA(Ile)-lysidine synthase family.

It is found in the plastid. The catalysed reaction is cytidine(34) in tRNA(Ile2) + L-lysine + ATP = lysidine(34) in tRNA(Ile2) + AMP + diphosphate + H(+). In terms of biological role, ligates lysine onto the cytidine present at position 34 of the AUA codon-specific tRNA(Ile) that contains the anticodon CAU, in an ATP-dependent manner. Cytidine is converted to lysidine, thus changing the amino acid specificity of the tRNA from methionine to isoleucine. The protein is tRNA(Ile)-lysidine synthase, plastid (tilS) of Helicosporidium sp. subsp. Simulium jonesii (Green alga).